A 349-amino-acid chain; its full sequence is Probable protease SohB (349 aa).

The Periplasmic portion of the chain corresponds to 1–8 (MELLSEYG). The helical transmembrane segment at 9–29 (LFLAKIVTVVLAIAAIAAIIV) threads the bilayer. Topologically, residues 30–349 (NVAQRNKRQR…WWQRGQKPLM (320 aa)) are cytoplasmic. Residue S178 is the Nucleophile of the active site. K230 acts as the Proton donor/acceptor in catalysis.

The protein belongs to the peptidase S49 family.

It is found in the cell inner membrane. In terms of biological role, multicopy suppressor of the HtrA (DegP) null phenotype. It is possibly a protease, not essential for bacterial viability. The protein is Probable protease SohB (sohB) of Escherichia coli (strain K12).